We begin with the raw amino-acid sequence, 254 residues long: Probable phosphatase Sbal_1472 (254 aa).

Residues histidine 8, histidine 10, histidine 16, histidine 41, glutamate 74, histidine 102, histidine 132, aspartate 193, and histidine 195 each contribute to the Zn(2+) site.

It belongs to the PHP family. Requires Zn(2+) as cofactor.

This is Probable phosphatase Sbal_1472 from Shewanella baltica (strain OS155 / ATCC BAA-1091).